The chain runs to 1323 residues: Lysine-specific demethylase 3A (1323 aa).

Disordered regions lie at residues 255–287 (TRTGAVKRKSSENNGSSVSKQAKSCSEASPSMC), 307–337 (ATPSSKDPRQQNTPQAANSPPNIGAKLPQGC), and 385–416 (SEPKGSCIQPKTNTDQESRLESAPQPVTGLPK). Phosphoserine is present on Ser-264. Composition is skewed to polar residues over residues 266 to 283 (ENNGSSVSKQAKSCSEAS) and 307 to 327 (ATPSSKDPRQQNTPQAANSPP). Ser-325 carries the phosphoserine modification. Ser-446 carries the post-translational modification Phosphoserine. Disordered regions lie at residues 468 to 487 (AEKKVEPSHLGSQSQNLKET) and 495 to 517 (SCCTRSSNKTQTPPARKSVLTDP). 2 stretches are compositionally biased toward polar residues: residues 477-486 (LGSQSQNLKE) and 495-507 (SCCTRSSNKTQTP). The segment at 662–687 (CDVCDTTIFNLHWVCPRCGFGVCVDC) adopts a C6-type zinc-finger fold. The short motif at 885 to 889 (LRNLL) is the LXXLL motif element. N6-acetyllysine is present on Lys-895. The JmjC domain occupies 1060-1283 (MPSRFDDLMA…HCFWLTQEFR (224 aa)). Residues His-1122, Asp-1124, and His-1251 each coordinate Fe cation.

Belongs to the JHDM2 histone demethylase family. Interacts with VRK1. The cofactor is Fe(2+). In terms of tissue distribution, highly expressed in testis (at protein level). Also expressed at high levels in tissues responsive to sympathetic nerve activity such as brown adipose tissue and skeletal muscle.

It is found in the cytoplasm. The protein localises to the nucleus. The enzyme catalyses N(6),N(6)-dimethyl-L-lysyl(9)-[histone H3] + 2 2-oxoglutarate + 2 O2 = L-lysyl(9)-[histone H3] + 2 formaldehyde + 2 succinate + 2 CO2. Its function is as follows. Histone demethylase that specifically demethylates 'Lys-9' of histone H3, thereby playing a central role in histone code. Preferentially demethylates mono- and dimethylated H3 'Lys-9' residue, with a preference for dimethylated residue, while it has weak or no activity on trimethylated H3 'Lys-9'. Demethylation of Lys residue generates formaldehyde and succinate. Involved in hormone-dependent transcriptional activation, by participating in recruitment to androgen-receptor target genes, resulting in H3 'Lys-9' demethylation and transcriptional activation. Involved in spermatogenesis by regulating expression of target genes such as PRM1 and TNP1 which are required for packaging and condensation of sperm chromatin. Involved in obesity resistance through regulation of metabolic genes such as PPARA and UCP1. The sequence is that of Lysine-specific demethylase 3A (Kdm3a) from Mus musculus (Mouse).